The following is a 395-amino-acid chain: tRNA-specific 2-thiouridylase MnmA (395 aa).

Residues 7-14 and Met33 each bind ATP; that span reads GLSGGVDS. Residues 95–97 are interaction with target base in tRNA; that stretch reads NPD. The active-site Nucleophile is Cys100. Cys100 and Cys200 are oxidised to a cystine. Residue Gly124 coordinates ATP. Residues 150-152 form an interaction with tRNA region; sequence KDQ. Catalysis depends on Cys200, which acts as the Cysteine persulfide intermediate. The interaction with tRNA stretch occupies residues 346 to 347; that stretch reads RY.

It belongs to the MnmA/TRMU family.

The protein localises to the cytoplasm. It carries out the reaction S-sulfanyl-L-cysteinyl-[protein] + uridine(34) in tRNA + AH2 + ATP = 2-thiouridine(34) in tRNA + L-cysteinyl-[protein] + A + AMP + diphosphate + H(+). In terms of biological role, catalyzes the 2-thiolation of uridine at the wobble position (U34) of tRNA, leading to the formation of s(2)U34. The sequence is that of tRNA-specific 2-thiouridylase MnmA from Flavobacterium johnsoniae (strain ATCC 17061 / DSM 2064 / JCM 8514 / BCRC 14874 / CCUG 350202 / NBRC 14942 / NCIMB 11054 / UW101) (Cytophaga johnsonae).